Reading from the N-terminus, the 106-residue chain is MERQNIRIRLKAFDHRALDMSAKEIVNTAKRTGAEVRGPVPLPTRIERFTVNRSPHIDKKSREQFEIRTHTRILDIVDPTPQTVDALMKLDLSSGVGIEIKLEGAR.

It belongs to the universal ribosomal protein uS10 family. Part of the 30S ribosomal subunit.

Functionally, involved in the binding of tRNA to the ribosomes. In Hyphomonas neptunium (strain ATCC 15444), this protein is Small ribosomal subunit protein uS10.